Here is a 170-residue protein sequence, read N- to C-terminus: Zinc finger A20 and AN1 domain-containing stress-associated protein 6 (170 aa).

An A20-type zinc finger spans residues 10-44 (PESNRLCVNNCGFLGSSATMNLCSNCYGDLCLKQQ). Zn(2+)-binding residues include cysteine 16, cysteine 20, cysteine 32, and cysteine 35. Residues 53 to 76 (TVESSLSVSPPSSSSSEISSPIIP) form a disordered region. An AN1-type zinc finger spans residues 105–151 (QQRPNRCTTCRKRVGLTGFKCRCGTMFCGVHRYPEIHGCSYDFKSAG). Cysteine 111, cysteine 114, cysteine 125, cysteine 127, cysteine 132, histidine 135, histidine 141, and cysteine 143 together coordinate Zn(2+).

Functionally, may be involved in environmental stress response. This chain is Zinc finger A20 and AN1 domain-containing stress-associated protein 6 (SAP6), found in Arabidopsis thaliana (Mouse-ear cress).